We begin with the raw amino-acid sequence, 213 residues long: Thymidine kinase (213 aa).

ATP-binding positions include 22–29 (GSMFSGKT) and 94–97 (DEAQ). Glu-95 serves as the catalytic Proton acceptor. Residues Cys-151, Cys-154, Cys-183, and Cys-186 each coordinate Zn(2+). The segment at 185-213 (RCFQPPRPTSTSSLKAPAPAATAPRPELP) is disordered. The segment covering 193-213 (TSTSSLKAPAPAATAPRPELP) has biased composition (low complexity).

Belongs to the thymidine kinase family. As to quaternary structure, homotetramer.

The protein localises to the cytoplasm. It catalyses the reaction thymidine + ATP = dTMP + ADP + H(+). The chain is Thymidine kinase from Rhodothermus sp. (strain ITI 518).